A 365-amino-acid polypeptide reads, in one-letter code: uncharacterized protein (365 aa).

The protein belongs to the NAD(P)-dependent epimerase/dehydratase family.

It localises to the cytoplasm. It is found in the nucleus. This is an uncharacterized protein from Schizosaccharomyces pombe (strain 972 / ATCC 24843) (Fission yeast).